We begin with the raw amino-acid sequence, 228 residues long: Cytidylate kinase (228 aa).

Residue 17 to 25 (GPSASGKGT) coordinates ATP.

It belongs to the cytidylate kinase family. Type 1 subfamily.

The protein localises to the cytoplasm. The enzyme catalyses CMP + ATP = CDP + ADP. It carries out the reaction dCMP + ATP = dCDP + ADP. The protein is Cytidylate kinase of Paraburkholderia xenovorans (strain LB400).